We begin with the raw amino-acid sequence, 515 residues long: 2-isopropylmalate synthase (515 aa).

Residues 5-267 (VIIFDTTLRD…DTRINTQEIH (263 aa)) form the Pyruvate carboxyltransferase domain. D14, H202, H204, and N238 together coordinate Mn(2+). The segment at 392 to 515 (VLDKLSAHST…VADIKNHKHH (124 aa)) is regulatory domain.

Belongs to the alpha-IPM synthase/homocitrate synthase family. LeuA type 1 subfamily. In terms of assembly, homodimer. The cofactor is Mn(2+).

The protein localises to the cytoplasm. It catalyses the reaction 3-methyl-2-oxobutanoate + acetyl-CoA + H2O = (2S)-2-isopropylmalate + CoA + H(+). The protein operates within amino-acid biosynthesis; L-leucine biosynthesis; L-leucine from 3-methyl-2-oxobutanoate: step 1/4. Its function is as follows. Catalyzes the condensation of the acetyl group of acetyl-CoA with 3-methyl-2-oxobutanoate (2-ketoisovalerate) to form 3-carboxy-3-hydroxy-4-methylpentanoate (2-isopropylmalate). This is 2-isopropylmalate synthase from Haemophilus influenzae (strain PittEE).